We begin with the raw amino-acid sequence, 191 residues long: Protein GrpE (191 aa).

2 stretches are compositionally biased toward basic and acidic residues: residues 1-19 and 29-42; these read MKDEHNQEHDHLSQKEPES and QQGEEKQEASEKEC. A disordered region spans residues 1–42; that stretch reads MKDEHNQEHDHLSQKEPESYQKACACKEQQGEEKQEASEKEC.

This sequence belongs to the GrpE family. In terms of assembly, homodimer.

The protein resides in the cytoplasm. Participates actively in the response to hyperosmotic and heat shock by preventing the aggregation of stress-denatured proteins, in association with DnaK and GrpE. It is the nucleotide exchange factor for DnaK and may function as a thermosensor. Unfolded proteins bind initially to DnaJ; upon interaction with the DnaJ-bound protein, DnaK hydrolyzes its bound ATP, resulting in the formation of a stable complex. GrpE releases ADP from DnaK; ATP binding to DnaK triggers the release of the substrate protein, thus completing the reaction cycle. Several rounds of ATP-dependent interactions between DnaJ, DnaK and GrpE are required for fully efficient folding. This chain is Protein GrpE, found in Helicobacter pylori (strain HPAG1).